The chain runs to 189 residues: Auxin-responsive protein IAA3 (189 aa).

The EAR-like (transcriptional repression) signature appears at 12 to 16 (LRLGL). The tract at residues 42 to 65 (TDTEKEIESSSRKTETSPPRKAQI) is disordered. A compositionally biased stretch (basic and acidic residues) spans 43–56 (DTEKEIESSSRKTE). The PB1 domain maps to 92 to 179 (GIYVKVSMDG…TCKRLRIMKG (88 aa)).

This sequence belongs to the Aux/IAA family. In terms of assembly, homodimers and heterodimers. Interacts with TPL. Interacts with TIR1, the F-box component of the Skp1-Cdc53/cullin-F-box (SCFTIR1) E3 ubiquitin ligase complex. In terms of processing, phosphorylated by phytochrome A in vitro. As to expression, highly expressed in stems and flowers. Expressed in hypocotyls, cotyledons and leaves, but barely detected in roots. Expressed in root tips. In the root meristem, specifically detected at the vascular tissue transition zone.

It is found in the nucleus. Aux/IAA proteins are short-lived transcriptional factors that function as repressors of early auxin response genes at low auxin concentrations. Repression is thought to result from the interaction with auxin response factors (ARFs), proteins that bind to the auxin-responsive promoter element (AuxRE). Plays a central role in auxin regulation of root growth, in gravitropism, and in lateral root formation. Regulated by an auxin-induced protein turnover. Formation of heterodimers with ARF proteins may alter their ability to modulate early auxin response genes expression. When activated by cytokinin, restricts the expression of the PIN genes to the vascular transition zone. Induction of SHY2 in the vascular transition zone restricts BRX expression to down-regulate PIN3 and thus limit meristem growth, but proper SHY2 expression requires BRX. Involved in meristem growth and in determining its size. May participate in strigolactone signaling to regulate meristem size and lateral root formation. The sequence is that of Auxin-responsive protein IAA3 (IAA3) from Arabidopsis thaliana (Mouse-ear cress).